Reading from the N-terminus, the 190-residue chain is Ferric nitrobindin-like protein (190 aa).

Positions 20–26 (GNWAGAG) match the GXWXGXG motif.

It belongs to the nitrobindin family.

The protein is Ferric nitrobindin-like protein of Streptomyces griseus subsp. griseus (strain JCM 4626 / CBS 651.72 / NBRC 13350 / KCC S-0626 / ISP 5235).